The following is a 541-amino-acid chain: Membrane protein insertase YidC (541 aa).

The next 5 helical transmembrane spans lie at 6-26, 349-369, 420-440, 457-477, and 500-520; these read NILLIGLLFVSFLLWQQWQAD, FVGNWGVAIILITLTVRGLLF, GGCLPILLQMPIFIALYWVLL, LSVQDPYYILPLLMGVSMFVM, and VIFTVFFLWFPSGLVLYWLVG.

The protein belongs to the OXA1/ALB3/YidC family. Type 1 subfamily. In terms of assembly, interacts with the Sec translocase complex via SecD. Specifically interacts with transmembrane segments of nascent integral membrane proteins during membrane integration.

The protein resides in the cell inner membrane. In terms of biological role, required for the insertion and/or proper folding and/or complex formation of integral membrane proteins into the membrane. Involved in integration of membrane proteins that insert both dependently and independently of the Sec translocase complex, as well as at least some lipoproteins. Aids folding of multispanning membrane proteins. This is Membrane protein insertase YidC from Shewanella sp. (strain MR-7).